Consider the following 138-residue polypeptide: Nucleoside diphosphate kinase (138 aa).

ATP-binding residues include lysine 9, phenylalanine 57, arginine 85, threonine 91, arginine 102, and asparagine 112. Histidine 115 (pros-phosphohistidine intermediate) is an active-site residue.

Belongs to the NDK family. As to quaternary structure, homotetramer. The cofactor is Mg(2+).

The protein localises to the cytoplasm. The catalysed reaction is a 2'-deoxyribonucleoside 5'-diphosphate + ATP = a 2'-deoxyribonucleoside 5'-triphosphate + ADP. It catalyses the reaction a ribonucleoside 5'-diphosphate + ATP = a ribonucleoside 5'-triphosphate + ADP. In terms of biological role, major role in the synthesis of nucleoside triphosphates other than ATP. The ATP gamma phosphate is transferred to the NDP beta phosphate via a ping-pong mechanism, using a phosphorylated active-site intermediate. The sequence is that of Nucleoside diphosphate kinase from Deinococcus radiodurans (strain ATCC 13939 / DSM 20539 / JCM 16871 / CCUG 27074 / LMG 4051 / NBRC 15346 / NCIMB 9279 / VKM B-1422 / R1).